The sequence spans 357 residues: Chorismate synthase (357 aa).

Arginine 47 lines the NADP(+) pocket. FMN-binding positions include 123–125 (RAS), glycine 281, 296–300 (KPTSS), and arginine 324.

The protein belongs to the chorismate synthase family. Homotetramer. The cofactor is FMNH2.

The enzyme catalyses 5-O-(1-carboxyvinyl)-3-phosphoshikimate = chorismate + phosphate. The protein operates within metabolic intermediate biosynthesis; chorismate biosynthesis; chorismate from D-erythrose 4-phosphate and phosphoenolpyruvate: step 7/7. In terms of biological role, catalyzes the anti-1,4-elimination of the C-3 phosphate and the C-6 proR hydrogen from 5-enolpyruvylshikimate-3-phosphate (EPSP) to yield chorismate, which is the branch point compound that serves as the starting substrate for the three terminal pathways of aromatic amino acid biosynthesis. This reaction introduces a second double bond into the aromatic ring system. The chain is Chorismate synthase from Chlamydia trachomatis serovar L2 (strain ATCC VR-902B / DSM 19102 / 434/Bu).